The chain runs to 231 residues: MQVVVPFAATEPKTRLADVLTPAERTAFARAMLADVLTAVVEAGHEPTVLATAPLDLETLDLEAAVRDAGSVAVDDRPLTEAVNARLPERGDGGDDGTHIDPVAVVMADLALATADALEALFSAAADVAVVPGRGAGTNALVVDHPEFRVDYHGASYLDHREIAHDVGATLETVDSFRLGTDIDEPADLVEVLVHGTETDRAPARLREFGFELERTDGRVTVARLEESRPK.

Belongs to the CofC family. In terms of assembly, homodimer.

The catalysed reaction is (2S)-2-phospholactate + GTP + H(+) = (2S)-lactyl-2-diphospho-5'-guanosine + diphosphate. The protein operates within cofactor biosynthesis; coenzyme F420 biosynthesis. Guanylyltransferase that catalyzes the activation of (2S)-2-phospholactate (2-PL) as (2S)-lactyl-2-diphospho-5'-guanosine, via the condensation of 2-PL with GTP. It is involved in the biosynthesis of coenzyme F420, a hydride carrier cofactor. This chain is 2-phospho-L-lactate guanylyltransferase, found in Haloterrigena turkmenica (strain ATCC 51198 / DSM 5511 / JCM 9101 / NCIMB 13204 / VKM B-1734 / 4k) (Halococcus turkmenicus).